The chain runs to 429 residues: MAVAVGRPSNEELRNLSLSGHVGFDSLPDQLVNKSTSQGFCFNILCVGETGIGKSTLMDTLFNTKFESDPATHNEPGVRLKARSYELQESNVRLKLTIVDTVGFGDQINKDDSYKPIVEYIDAQFEAYLQEELKIKRSLFNYHDTRIHACLYFIAPTGHSLKSLDLVTMKKLDSKVNIIPIIAKADTIAKNELHKFKSKIMSELVSNGVQIYQFPTDEETVAEINATMSVHLPFAVVGSTEEVKIGNKMAKARQYPWGVVQVENENHCDFVKLREMLIRVNMEDLREQTHTRHYELYRRCKLEEMGFKDTDPDSKPFSLQETYEAKRNEFLGELQKKEEEMRQMFVMRVKEKEAELKEAEKELHEKFDLLKRTHQEEKKKVEDKKKELEEEVNNFQKKKAAAQLLQSQAQQSGAQQTKKDKDKKNASFT.

Position 2 is an N-acetylalanine (alanine 2). Serine 9 carries the post-translational modification Phosphoserine. The Septin-type G domain maps to 38–304 (QGFCFNILCV…ELYRRCKLEE (267 aa)). The interval 48–55 (GETGIGKS) is G1 motif. GTP is bound by residues 48-55 (GETGIGKS), glycine 103, 184-192 (KADTIAKNE), glycine 238, and arginine 253. A G3 motif region spans residues 100–103 (DTVG). Residues 183–186 (AKAD) are G4 motif. A coiled-coil region spans residues 320–415 (QETYEAKRNE…QSQAQQSGAQ (96 aa)). Residues 398–429 (KKAAAQLLQSQAQQSGAQQTKKDKDKKNASFT) are disordered. Low complexity predominate over residues 401-416 (AAQLLQSQAQQSGAQQ). A compositionally biased stretch (basic and acidic residues) spans 417 to 429 (TKKDKDKKNASFT).

This sequence belongs to the TRAFAC class TrmE-Era-EngA-EngB-Septin-like GTPase superfamily. Septin GTPase family. In terms of assembly, septins polymerize into heterooligomeric protein complexes that form filaments, and can associate with cellular membranes, actin filaments and microtubules. Forms homooligomers. GTPase activity is required for filament formation. Interacts with SEPTIN7, SEPTIN9 and SEPTIN12. In terms of tissue distribution, widely expressed, except in leukocytes.

The protein localises to the cytoplasm. The protein resides in the cytoskeleton. It is found in the synapse. It localises to the cell projection. Its subcellular location is the dendritic spine. The protein localises to the axon. Filament-forming cytoskeletal GTPase. May play a role in cytokinesis (Potential). May play a role in the cytoarchitecture of neurons, including dendritic arborization and dendritic spines, and in GABAergic synaptic connectivity. During Listeria monocytogenes infection, not required for the bacterial entry process, but restricts its efficacy. The protein is Septin-11 of Homo sapiens (Human).